Reading from the N-terminus, the 589-residue chain is Protein kinase G11A (589 aa).

Residues 1-167 (MASKAMPRAP…SACSSISSVT (167 aa)) are disordered. 3 stretches are compositionally biased toward polar residues: residues 15-36 (NLQS…SPSK), 46-55 (AESSKPNSEV), and 63-76 (TQHQ…TGSN). Over residues 91–100 (RLADEEKGVV) the composition is skewed to basic and acidic residues. The span at 142 to 165 (SSSRCRPSTSSDVSDESACSSISS) shows a compositional bias: low complexity. In terms of domain architecture, Protein kinase spans 195 to 533 (FKLLKKLGCG…ATEIKQHPFF (339 aa)). ATP-binding positions include 201–209 (LGCGDIGSV) and K224. Residue D320 is the Proton acceptor of the active site. Residues 551-589 (RPVEIERPPKQPVSTSEPAAAPSDAAQKSSDSYLEFDFF) are disordered.

Belongs to the protein kinase superfamily. Ser/Thr protein kinase family.

It catalyses the reaction L-seryl-[protein] + ATP = O-phospho-L-seryl-[protein] + ADP + H(+). The catalysed reaction is L-threonyl-[protein] + ATP = O-phospho-L-threonyl-[protein] + ADP + H(+). Functionally, may play a role in the regulation of metabolism and signal transduction processes. This chain is Protein kinase G11A, found in Oryza sativa subsp. indica (Rice).